Reading from the N-terminus, the 502-residue chain is MSVDATLSFEEAMEKYDPVLGFEVHVELNTKTKMFSSAPNVFGDEPNTNVNEVDLGMPGVLPVVNKTAVESSIKIGLALNCKIAEYCRFARKNYFYPDTPKNFQTSQYDEPIAYDGYLDIELEDGTVFRVEIERAHMEEDAGKLTHMGGAAGRIQGADYSLVDYNRSGVPLVEIVTKPIEGAGSRAPELAKAYVAAIREIVKNLGVSDAKMERGNVRCDANVSLRPHGRERFGIRSETKNVNSLRAVEHAVRYEIQRHAAVLDSGEPVIQETRHWHEDTRSTTSGRPKSDADDYRYFPEPDLVPVVASREWVEELRATLPEPPAERRKRLKEAWGYSDLEFRDVVNAGVMDSIEETIAAGASADVARKWWMGEIVGRAKVADVDPSELGVTPQVIVELNKLVEDGKINNKMATQVLDGVLAGEGTPAEIVEKRGLAVVSDDGPLLEAIDAALAAQPDVAEKIRGGKVQAIGAIVGGVMKATRGQADAGRVRELILEKLGVEG.

Residues 272–293 (TRHWHEDTRSTTSGRPKSDADD) form a disordered region.

Belongs to the GatB/GatE family. GatB subfamily. Heterotrimer of A, B and C subunits.

The catalysed reaction is L-glutamyl-tRNA(Gln) + L-glutamine + ATP + H2O = L-glutaminyl-tRNA(Gln) + L-glutamate + ADP + phosphate + H(+). It catalyses the reaction L-aspartyl-tRNA(Asn) + L-glutamine + ATP + H2O = L-asparaginyl-tRNA(Asn) + L-glutamate + ADP + phosphate + 2 H(+). In terms of biological role, allows the formation of correctly charged Asn-tRNA(Asn) or Gln-tRNA(Gln) through the transamidation of misacylated Asp-tRNA(Asn) or Glu-tRNA(Gln) in organisms which lack either or both of asparaginyl-tRNA or glutaminyl-tRNA synthetases. The reaction takes place in the presence of glutamine and ATP through an activated phospho-Asp-tRNA(Asn) or phospho-Glu-tRNA(Gln). The protein is Aspartyl/glutamyl-tRNA(Asn/Gln) amidotransferase subunit B of Paenarthrobacter aurescens (strain TC1).